The chain runs to 209 residues: Ribosomal RNA large subunit methyltransferase E (209 aa).

Glycine 63, tryptophan 65, aspartate 83, aspartate 99, and aspartate 124 together coordinate S-adenosyl-L-methionine. The active-site Proton acceptor is the lysine 164.

This sequence belongs to the class I-like SAM-binding methyltransferase superfamily. RNA methyltransferase RlmE family.

Its subcellular location is the cytoplasm. It catalyses the reaction uridine(2552) in 23S rRNA + S-adenosyl-L-methionine = 2'-O-methyluridine(2552) in 23S rRNA + S-adenosyl-L-homocysteine + H(+). Its function is as follows. Specifically methylates the uridine in position 2552 of 23S rRNA at the 2'-O position of the ribose in the fully assembled 50S ribosomal subunit. The sequence is that of Ribosomal RNA large subunit methyltransferase E from Photobacterium profundum (strain SS9).